A 147-amino-acid chain; its full sequence is Hemoglobin subunit gamma-1 (147 aa).

A Globin domain is found at 3-147 (NFTAEDKAAI…VASALGSRYH (145 aa)). Threonine 13 bears the Phosphothreonine mark. Residues serine 45, serine 51, and serine 53 each carry the phosphoserine modification. Lysine 60 bears the N6-acetyllysine mark. Histidine 64 serves as a coordination point for heme b. Residue lysine 83 is modified to N6-acetyllysine. Position 93 (histidine 93) interacts with heme b. S-nitrosocysteine is present on cysteine 94. Residue serine 140 is modified to Phosphoserine.

The protein belongs to the globin family. As to quaternary structure, heterotetramer of two alpha chains and two gamma chains in fetal hemoglobin (Hb F). Red blood cells.

Gamma chains make up the fetal hemoglobin F, in combination with alpha chains. This chain is Hemoglobin subunit gamma-1 (HBG1), found in Sapajus apella (Brown-capped capuchin).